The chain runs to 333 residues: C4-dicarboxylate-binding periplasmic protein DctP (333 aa).

The first 26 residues, 1–26 (MLTRRILGALVGATALSLALSVPALA), serve as a signal peptide directing secretion.

It belongs to the bacterial solute-binding protein 7 family. The complex comprises the extracytoplasmic solute receptor protein DctP, and the two transmembrane proteins DctQ and DctM.

It localises to the periplasm. Functionally, part of the tripartite ATP-independent periplasmic (TRAP) transport system DctPQM involved in C4-dicarboxylates uptake. Binds C4-dicarboxylates such as fumarate, succinate, L-malate and D-malate. The polypeptide is C4-dicarboxylate-binding periplasmic protein DctP (Rhodobacter capsulatus (Rhodopseudomonas capsulata)).